Here is a 442-residue protein sequence, read N- to C-terminus: tRNA modification GTPase MnmE (442 aa).

Arg-22, Glu-79, and Lys-119 together coordinate (6S)-5-formyl-5,6,7,8-tetrahydrofolate. In terms of domain architecture, TrmE-type G spans 216–366 (GIKTCLVGAP…LLEKIKSIFA (151 aa)). Asn-226 is a binding site for K(+). Residues 226 to 231 (NSGKSS), 245 to 251 (SEIPGTT), and 270 to 273 (DTAG) contribute to the GTP site. Position 230 (Ser-230) interacts with Mg(2+). The K(+) site is built by Ser-245, Ile-247, and Thr-250. Thr-251 is a binding site for Mg(2+). A (6S)-5-formyl-5,6,7,8-tetrahydrofolate-binding site is contributed by Lys-442.

The protein belongs to the TRAFAC class TrmE-Era-EngA-EngB-Septin-like GTPase superfamily. TrmE GTPase family. In terms of assembly, homodimer. Heterotetramer of two MnmE and two MnmG subunits. Requires K(+) as cofactor.

It is found in the cytoplasm. Exhibits a very high intrinsic GTPase hydrolysis rate. Involved in the addition of a carboxymethylaminomethyl (cmnm) group at the wobble position (U34) of certain tRNAs, forming tRNA-cmnm(5)s(2)U34. The chain is tRNA modification GTPase MnmE from Mesomycoplasma hyopneumoniae (strain J / ATCC 25934 / NCTC 10110) (Mycoplasma hyopneumoniae).